Consider the following 234-residue polypeptide: Glycerol uptake facilitator protein (234 aa).

6 helical membrane-spanning segments follow: residues 9–29 (FLGTLILILLGNGVVAGVVLP), 37–57 (GWIVITMGWGIAVAVAVFVSG), 61–81 (PAYLNPAVTIGVALKGGLPWA), 83–103 (VLPYILAQFAGAMLGQILVWL), 135–155 (LISEILGTFVLVLTIFALGLY), and 159–179 (AGIGTFAVGTLIVGIGLSLGG). Residues 65–67 (NPA) carry the NPA 1 motif. The NPA 2 motif lies at 186 to 188 (NPA). The chain crosses the membrane as a helical span at residues 214 to 234 (WIPVVGPVIGAALAVLVFSLF).

The protein belongs to the MIP/aquaporin (TC 1.A.8) family.

Its subcellular location is the cell membrane. The enzyme catalyses glycerol(in) = glycerol(out). Functionally, mediates glycerol diffusion across the cytoplasmic membrane via a pore-type mechanism. This chain is Glycerol uptake facilitator protein (glpF), found in Streptococcus pneumoniae serotype 4 (strain ATCC BAA-334 / TIGR4).